Reading from the N-terminus, the 457-residue chain is MEKKTRLFGTDGIRGTANQYPMTPDMVVKIGQAIGYLLRKEAEEKSSSVRKVVIGKDTRLSGYMIEQALASGLNSMGVFVQLVGPLPTPGIGYLTRTMRAAAGIVISASHNPFHDNGIKVFGSDGFKISEEMEREIERLVLEEDLTPLLPPSKEIGRTRRIEDSQGRYIVYVKGTFPLEYTLDGMRIVLDTANGASYKVAPSIFQELGAEVIQLGDDPNGTNINDKVGALYPQKLAESVLHYRADVGISLDGDADRVIMVDEKGEIVNGDRILAICALHMKERGLLKGDTLVATQMSNFGLEKRMNEAGIKLVKTGVGDKYVVEEMRKHGYNLGGEQSGHIIFLDHTTTGDGCIAALSVLAVMKQTGKKMSDLNHVFEDVPQILINCRVKRRAELSELAGYNDMIRNIEKKLAGNGRVFVRFSGTEPVIRVLVEGTEKAQITQFAEEIASFLEKELS.

Ser109 functions as the Phosphoserine intermediate in the catalytic mechanism. Residues Ser109, Asp251, Asp253, and Asp255 each contribute to the Mg(2+) site. A Phosphoserine modification is found at Ser109.

This sequence belongs to the phosphohexose mutase family. Requires Mg(2+) as cofactor. Post-translationally, activated by phosphorylation.

It carries out the reaction alpha-D-glucosamine 1-phosphate = D-glucosamine 6-phosphate. In terms of biological role, catalyzes the conversion of glucosamine-6-phosphate to glucosamine-1-phosphate. This chain is Phosphoglucosamine mutase, found in Bdellovibrio bacteriovorus (strain ATCC 15356 / DSM 50701 / NCIMB 9529 / HD100).